The chain runs to 638 residues: 1-deoxy-D-xylulose-5-phosphate synthase (638 aa).

Thiamine diphosphate is bound by residues H74 and 115 to 117 (GHS). Residue D146 participates in Mg(2+) binding. Residues 147–148 (GA), N175, Y286, and E366 each bind thiamine diphosphate. N175 serves as a coordination point for Mg(2+).

Belongs to the transketolase family. DXPS subfamily. In terms of assembly, homodimer. Mg(2+) is required as a cofactor. Requires thiamine diphosphate as cofactor.

It catalyses the reaction D-glyceraldehyde 3-phosphate + pyruvate + H(+) = 1-deoxy-D-xylulose 5-phosphate + CO2. It functions in the pathway metabolic intermediate biosynthesis; 1-deoxy-D-xylulose 5-phosphate biosynthesis; 1-deoxy-D-xylulose 5-phosphate from D-glyceraldehyde 3-phosphate and pyruvate: step 1/1. Catalyzes the acyloin condensation reaction between C atoms 2 and 3 of pyruvate and glyceraldehyde 3-phosphate to yield 1-deoxy-D-xylulose-5-phosphate (DXP). The sequence is that of 1-deoxy-D-xylulose-5-phosphate synthase from Syntrophomonas wolfei subsp. wolfei (strain DSM 2245B / Goettingen).